A 473-amino-acid chain; its full sequence is 3-isopropylmalate dehydratase large subunit (473 aa).

[4Fe-4S] cluster contacts are provided by Cys-348, Cys-413, and Cys-416.

It belongs to the aconitase/IPM isomerase family. LeuC type 1 subfamily. Heterodimer of LeuC and LeuD. Requires [4Fe-4S] cluster as cofactor.

The enzyme catalyses (2R,3S)-3-isopropylmalate = (2S)-2-isopropylmalate. The protein operates within amino-acid biosynthesis; L-leucine biosynthesis; L-leucine from 3-methyl-2-oxobutanoate: step 2/4. Its function is as follows. Catalyzes the isomerization between 2-isopropylmalate and 3-isopropylmalate, via the formation of 2-isopropylmaleate. This Parvibaculum lavamentivorans (strain DS-1 / DSM 13023 / NCIMB 13966) protein is 3-isopropylmalate dehydratase large subunit.